The primary structure comprises 329 residues: NAD(+) hydrolase TcpA (329 aa).

Residues 5–134 (VSISYLALEQ…ADCVRFYTVR (130 aa)) enclose the MPN domain. The 133-residue stretch at 192–324 (FEYDVFICHA…YVVNEILRVL (133 aa)) folds into the TIR domain. NAD(+)-binding positions include 201 to 202 (AH) and S231. The active site involves E267.

The catalysed reaction is NAD(+) + H2O = ADP-D-ribose + nicotinamide + H(+). Functionally, NAD(+) hydrolase (NADase) that catalyzes cleavage of NAD(+) into ADP-D-ribose (ADPR) and nicotinamide. This is NAD(+) hydrolase TcpA from Theionarchaea archaeon (strain DG-70-1).